A 449-amino-acid polypeptide reads, in one-letter code: Tubulin alpha-2 chain (449 aa).

Residues Gln11, Glu71, Ser140, Gly144, Thr145, Thr179, Asn206, and Asn228 each contribute to the GTP site. Position 71 (Glu71) interacts with Mg(2+). Residue Glu254 is part of the active site.

It belongs to the tubulin family. Dimer of alpha and beta chains. A typical microtubule is a hollow water-filled tube with an outer diameter of 25 nm and an inner diameter of 15 nM. Alpha-beta heterodimers associate head-to-tail to form protofilaments running lengthwise along the microtubule wall with the beta-tubulin subunit facing the microtubule plus end conferring a structural polarity. Microtubules usually have 13 protofilaments but different protofilament numbers can be found in some organisms and specialized cells. It depends on Mg(2+) as a cofactor.

The protein localises to the cytoplasm. It localises to the cytoskeleton. It carries out the reaction GTP + H2O = GDP + phosphate + H(+). Functionally, tubulin is the major constituent of microtubules, a cylinder consisting of laterally associated linear protofilaments composed of alpha- and beta-tubulin heterodimers. Microtubules grow by the addition of GTP-tubulin dimers to the microtubule end, where a stabilizing cap forms. Below the cap, tubulin dimers are in GDP-bound state, owing to GTPase activity of alpha-tubulin. The sequence is that of Tubulin alpha-2 chain (tub1) from Schizosaccharomyces pombe (strain 972 / ATCC 24843) (Fission yeast).